We begin with the raw amino-acid sequence, 149 residues long: Myoglobin (149 aa).

V2 carries the N-acetylvaline modification. The Globin domain occupies 2-143 (VDWEKVNSVW…ICSDIEKEYK (142 aa)). Residue H89 participates in heme b binding.

Belongs to the globin family. In terms of assembly, monomeric.

The protein resides in the cytoplasm. Its subcellular location is the sarcoplasm. It catalyses the reaction Fe(III)-heme b-[protein] + nitric oxide + H2O = Fe(II)-heme b-[protein] + nitrite + 2 H(+). The enzyme catalyses H2O2 + AH2 = A + 2 H2O. In terms of biological role, monomeric heme protein which primary function is to store oxygen and facilitate its diffusion within muscle tissues. Reversibly binds oxygen through a pentacoordinated heme iron and enables its timely and efficient release as needed during periods of heightened demand. Depending on the oxidative conditions of tissues and cells, and in addition to its ability to bind oxygen, it also has a nitrite reductase activity whereby it regulates the production of bioactive nitric oxide. Under stress conditions, like hypoxia and anoxia, it also protects cells against reactive oxygen species thanks to its pseudoperoxidase activity. This is Myoglobin (mb) from Mustelus antarcticus (Gummy shark).